The primary structure comprises 286 residues: Elongation factor Ts (286 aa).

An involved in Mg(2+) ion dislocation from EF-Tu region spans residues 82–85 (TDFV).

The protein belongs to the EF-Ts family.

The protein localises to the cytoplasm. Its function is as follows. Associates with the EF-Tu.GDP complex and induces the exchange of GDP to GTP. It remains bound to the aminoacyl-tRNA.EF-Tu.GTP complex up to the GTP hydrolysis stage on the ribosome. The sequence is that of Elongation factor Ts from Hamiltonella defensa subsp. Acyrthosiphon pisum (strain 5AT).